We begin with the raw amino-acid sequence, 969 residues long: Isoleucine--tRNA ligase (969 aa).

The 'HIGH' region signature appears at 70-80 (PYANGAIHIGH). Glu601 provides a ligand contact to L-isoleucyl-5'-AMP. Positions 642–646 (KMSKS) match the 'KMSKS' region motif. Lys645 contributes to the ATP binding site.

The protein belongs to the class-I aminoacyl-tRNA synthetase family. IleS type 1 subfamily. In terms of assembly, monomer.

It localises to the cytoplasm. The enzyme catalyses tRNA(Ile) + L-isoleucine + ATP = L-isoleucyl-tRNA(Ile) + AMP + diphosphate. In terms of biological role, catalyzes the attachment of isoleucine to tRNA(Ile). As IleRS can inadvertently accommodate and process structurally similar amino acids such as valine, to avoid such errors it has two additional distinct tRNA(Ile)-dependent editing activities. One activity is designated as 'pretransfer' editing and involves the hydrolysis of activated Val-AMP. The other activity is designated 'posttransfer' editing and involves deacylation of mischarged Val-tRNA(Ile). This is Isoleucine--tRNA ligase from Caulobacter vibrioides (strain ATCC 19089 / CIP 103742 / CB 15) (Caulobacter crescentus).